The following is a 692-amino-acid chain: MPREYPLERTRNIGIMAHIDAGKTTTTERILFYTGKVHKMGEVHDGAATMDWMVQEQERGITITSAATTCFWKNHRINIIDTPGHVDFTVEVERSLRVLDGAVAIFCAVGGVEPQSETVWRQADKYGVPRIAYVNKMDRMGANFFEVVRQIKERLGANPVPIQLPIGNEDTFQGVIDLIENKAIIYTDDLGTQLAEAEIPAEMLDLVAEYREKVMEAAAEADEELMLKYLDGEELTPEEIRAGLRKATIAVKVVPVLCGSSFKNKGVQPLLDAIVYYLPSPVDIPAVRGINPETGDEDFRKASDSEPFAALAFKIMADPYVGKLTFFRVYSGVLKAGSYVLNSTKGKKERIGRLLRMHANHREEIDEVCSGDIAAAVGLKDTHTGDTICDEKHPIVLESMEFPEPVINVAIEPKTKQDQEKMSIALQRLAEEDPTFKMWTDQETGQTIIAGMGELHLEIIVDRLMREFKVEANVGKPQVAYKETVRGTAKAEGKYIRQTGGRGQYGHVWIEIEPLEPGKGYEFVNKIVGGVIPKEYIPAVDAGVREALESGVLAGYPVIDVRVTLFDGSFHEVDSSEMAFKIAGSMAAKQAVLKANPVLLEPIMKVEVVVPEEYMGEVIGDLNSRRGRIEGMEARNNMQVVRGYVPLAEMFGYATDLRSKTQGRGTYTMHFSHYEEVPKNLADQIIQKRQGK.

A tr-type G domain is found at 8–282 (ERTRNIGIMA…AIVYYLPSPV (275 aa)). GTP is bound by residues 17-24 (AHIDAGKT), 81-85 (DTPGH), and 135-138 (NKMD).

This sequence belongs to the TRAFAC class translation factor GTPase superfamily. Classic translation factor GTPase family. EF-G/EF-2 subfamily.

The protein resides in the cytoplasm. Its function is as follows. Catalyzes the GTP-dependent ribosomal translocation step during translation elongation. During this step, the ribosome changes from the pre-translocational (PRE) to the post-translocational (POST) state as the newly formed A-site-bound peptidyl-tRNA and P-site-bound deacylated tRNA move to the P and E sites, respectively. Catalyzes the coordinated movement of the two tRNA molecules, the mRNA and conformational changes in the ribosome. The sequence is that of Elongation factor G from Carboxydothermus hydrogenoformans (strain ATCC BAA-161 / DSM 6008 / Z-2901).